Here is a 196-residue protein sequence, read N- to C-terminus: Probable malonic semialdehyde reductase RutE (196 aa).

The protein belongs to the nitroreductase family. HadB/RutE subfamily. Requires FMN as cofactor.

The enzyme catalyses 3-hydroxypropanoate + NADP(+) = 3-oxopropanoate + NADPH + H(+). May reduce toxic product malonic semialdehyde to 3-hydroxypropionic acid, which is excreted. The sequence is that of Probable malonic semialdehyde reductase RutE from Escherichia coli (strain K12 / MC4100 / BW2952).